A 280-amino-acid polypeptide reads, in one-letter code: DegV domain-containing protein Mb2440c (280 aa).

One can recognise a DegV domain in the interval 3 to 274; that stretch reads VVVVTDTSCR…AGAVGVCVDV (272 aa). Ser-89 is a binding site for hexadecanoate.

Functionally, may bind long-chain fatty acids, such as palmitate, and may play a role in lipid transport or fatty acid metabolism. This Mycobacterium bovis (strain ATCC BAA-935 / AF2122/97) protein is DegV domain-containing protein Mb2440c.